Here is a 524-residue protein sequence, read N- to C-terminus: BEL1-like homeodomain protein 3 (524 aa).

Positions 171–187 (SRYLKPTQQLLDEVVSV) are SR/KY domain. Composition is skewed to basic and acidic residues over residues 195–205 (NKKMKNDKGQD) and 216–235 (EDDK…ELQS). Residues 195–236 (NKKMKNDKGQDFHNGSSDNITEDDKSQSQELSPSERQELQSK) are disordered. The segment at 229-300 (ERQELQSKKS…CLRDAIKEQI (72 aa)) is BELL domain. Residues 346-408 (AWRPQRGLPE…NARVRLWKPM (63 aa)) constitute a DNA-binding region (homeobox). The disordered stretch occupies residues 429-463 (QDTKKMQETSQLKHEDSSSSQQQNQGNNNNNIPYT). A compositionally biased stretch (basic and acidic residues) spans 430 to 445 (DTKKMQETSQLKHEDS). Over residues 446 to 459 (SSSQQQNQGNNNNN) the composition is skewed to low complexity.

This sequence belongs to the TALE/BELL homeobox family. In terms of assembly, may form heterodimeric complex with the TALE/KNOX protein STM. Interacts with OFP1, OFP2, OFP3, OFP4, OFP5 and OFP15.

The protein resides in the nucleus. Transcription factor that is responsive of the nuclear import of SHOOT MERISTEMLESS (STM). The polypeptide is BEL1-like homeodomain protein 3 (BLH3) (Arabidopsis thaliana (Mouse-ear cress)).